The primary structure comprises 963 residues: TBC1 domain family member 2B (963 aa).

The interval Met-1–Pro-30 is disordered. Positions Ala-19–Pro-30 are enriched in low complexity. One can recognise a PH domain in the interval Pro-34–Trp-139. Phosphoserine occurs at positions 155 and 317. The disordered stretch occupies residues Glu-272 to Gln-348. Residues Gly-318 to Gln-348 are compositionally biased toward low complexity. Positions Ala-337–Leu-535 form a coiled coil. Ser-473 is modified (phosphoserine). One can recognise a Rab-GAP TBC domain in the interval Gly-662–Gly-856. Ser-957 bears the Phosphoserine mark.

Its subcellular location is the early endosome. In terms of biological role, GTPase-activating protein that plays a role in the early steps of endocytosis. The polypeptide is TBC1 domain family member 2B (TBC1D2B) (Homo sapiens (Human)).